The chain runs to 657 residues: MLKTLGLRSLCPSLGGRGFRRHPNINKYTLSLVRVRWNHHLSNAEIQARIENIPQENYRNFSIVAHVDHGKSTLSDRLLEITGVIDKNSSNKQVLDKLEVERERGITIKAQTCTMFYHDKRNGEDYLLHLVDTPGHVDFRGEVSRSYASCGGALLLVDASQGVQAQTVANFYLAYSMGLKLIPVVNKIDLNVADVERAKAEIEDNFELPRDEIIGVSAKTGLNVKEMLLPTIVDRIPPPTGNKKKPFRALLVDSWYDSYLGVILLVNIVDGKLKKGEKVLCAHTNKKYEVKELGIMYPDRVPTGSLVVGQVGYVVLGMKDSSDAHVGDTLMHVGKESVTDILPGFEEQKPMVYVGAFPSTGTEFKAMDDDINRLVLNDRSVTLERETSNALGQGWRLGFLGSLHASVFRERLEKEYGSKLIITQPTVPYMVRMTDGTESIITNPDDFPDSATRRMKVEELLEPFVEATITLPQEFLGNVIKLCDANRGQQKEITYLNTRGQVVLKYHLPLAHLVDDFFGKLKAASKGYASLDYEDIGYRESDVVKLELLVNGQSIDALARVLHRTEVEKVGREWVQKFKEYVKSQLFEVVIQARAGTKIVARQTIKARRKDVLARLHASDVSRRKKLLEKQKEGKKQMRSVGRVQINQEAYQAFLKR.

A mitochondrion-targeting transit peptide spans 1–21; that stretch reads MLKTLGLRSLCPSLGGRGFRR. A tr-type G domain is found at 56–240; sequence ENYRNFSIVA…TIVDRIPPPT (185 aa). GTP is bound by residues 65-72, 132-136, and 186-189; these read AHVDHGKS, DTPGH, and NKID.

Belongs to the TRAFAC class translation factor GTPase superfamily. Classic translation factor GTPase family. LepA subfamily.

Its subcellular location is the mitochondrion inner membrane. It catalyses the reaction GTP + H2O = GDP + phosphate + H(+). In terms of biological role, promotes mitochondrial protein synthesis. May act as a fidelity factor of the translation reaction, by catalyzing a one-codon backward translocation of tRNAs on improperly translocated ribosomes. Binds to mitochondrial ribosomes in a GTP-dependent manner. This is Translation factor GUF1, mitochondrial from Candida glabrata (strain ATCC 2001 / BCRC 20586 / JCM 3761 / NBRC 0622 / NRRL Y-65 / CBS 138) (Yeast).